Here is a 224-residue protein sequence, read N- to C-terminus: tRNA (guanine-N(7)-)-methyltransferase (224 aa).

The S-adenosyl-L-methionine site is built by glutamate 45, glutamate 70, aspartate 97, and aspartate 119. Aspartate 119 is an active-site residue. Residues lysine 123, aspartate 155, and 199 to 202 (TEYE) each bind substrate.

This sequence belongs to the class I-like SAM-binding methyltransferase superfamily. TrmB family.

The enzyme catalyses guanosine(46) in tRNA + S-adenosyl-L-methionine = N(7)-methylguanosine(46) in tRNA + S-adenosyl-L-homocysteine. Its pathway is tRNA modification; N(7)-methylguanine-tRNA biosynthesis. Catalyzes the formation of N(7)-methylguanine at position 46 (m7G46) in tRNA. The sequence is that of tRNA (guanine-N(7)-)-methyltransferase from Ureaplasma urealyticum serovar 10 (strain ATCC 33699 / Western).